The chain runs to 271 residues: Protein MGF 360-15R (271 aa).

It belongs to the asfivirus MGF 360 family.

Plays a role in virus cell tropism, and may be required for efficient virus replication in macrophages. This African swine fever virus (isolate Tick/Malawi/Lil 20-1/1983) (ASFV) protein is Protein MGF 360-15R.